We begin with the raw amino-acid sequence, 433 residues long: Cysteine--tRNA ligase (433 aa).

A Zn(2+)-binding site is contributed by cysteine 4. The short motif at proline 6 to asparagine 16 is the 'HIGH' region element. Zn(2+) is bound by residues cysteine 188, histidine 213, and glutamate 217. Positions lysine 246 to serine 250 match the 'KMSKS' region motif. Position 249 (lysine 249) interacts with ATP.

Belongs to the class-I aminoacyl-tRNA synthetase family. In terms of assembly, monomer. Requires Zn(2+) as cofactor.

It is found in the cytoplasm. It catalyses the reaction tRNA(Cys) + L-cysteine + ATP = L-cysteinyl-tRNA(Cys) + AMP + diphosphate. The sequence is that of Cysteine--tRNA ligase from Wolbachia sp. subsp. Brugia malayi (strain TRS).